Here is a 194-residue protein sequence, read N- to C-terminus: dTTP/UTP pyrophosphatase (194 aa).

Catalysis depends on D73, which acts as the Proton acceptor.

This sequence belongs to the Maf family. YhdE subfamily. A divalent metal cation is required as a cofactor.

Its subcellular location is the cytoplasm. It carries out the reaction dTTP + H2O = dTMP + diphosphate + H(+). It catalyses the reaction UTP + H2O = UMP + diphosphate + H(+). Its function is as follows. Nucleoside triphosphate pyrophosphatase that hydrolyzes dTTP and UTP. May have a dual role in cell division arrest and in preventing the incorporation of modified nucleotides into cellular nucleic acids. The polypeptide is dTTP/UTP pyrophosphatase (Clostridium botulinum (strain ATCC 19397 / Type A)).